The sequence spans 344 residues: Hydrophobic dipeptide epimerase (344 aa).

Substrate contacts are provided by residues Thr-126 and 151–153 (KIK). Mg(2+)-binding residues include Asp-184, Glu-210, and Asp-235. Residues Lys-257 and 307-309 (DLD) contribute to the substrate site.

Belongs to the mandelate racemase/muconate lactonizing enzyme family. Requires Mg(2+) as cofactor.

In terms of biological role, dipeptide epimerase with a preference for hydrophobic substrates. Catalyzes the epimerization of L-Ala-L-Thr, L-Ala-L-Met, L-Ala-L-His, L-Ala-L-Phe, L-Ala-L-Tyr, L-Ala-L-Trp, L-Ile-L-Ala, L-Ile-L-Ser, L-Ile-L-Met, L-Ile-L-His, L-Ile-L-Phe, L-Ile-L-Tyr, L-Ile-L-Trp, L-Phe-L-Met, L-Phe-L-His, L-Phe-L-Phe, L-Phe-L-Tyr, L-Phe-L-Trp, L-Phe-L-Ser, L-Phe-L-Thr and L-Phe-L-Lys (in vitro). This Roseobacter litoralis (strain ATCC 49566 / DSM 6996 / JCM 21268 / NBRC 15278 / OCh 149) protein is Hydrophobic dipeptide epimerase.